The following is a 161-amino-acid chain: Large ribosomal subunit protein eL21 (161 aa).

Belongs to the eukaryotic ribosomal protein eL21 family.

This chain is Large ribosomal subunit protein eL21 (RPL21), found in Cyanophora paradoxa.